We begin with the raw amino-acid sequence, 85 residues long: Large ribosomal subunit protein bL27 (85 aa).

Positions 1 to 20 (MAHKKAAGSTRNGRDSEAKR) are disordered.

This sequence belongs to the bacterial ribosomal protein bL27 family.

In Colwellia psychrerythraea (strain 34H / ATCC BAA-681) (Vibrio psychroerythus), this protein is Large ribosomal subunit protein bL27.